We begin with the raw amino-acid sequence, 510 residues long: F-box only protein 15 (510 aa).

Positions 77–117 (MPSEILLKIFSYLDAVSLLCTGCVSRRFYHLANDNFIWIGI) constitute an F-box domain.

In terms of assembly, directly interacts with SKP1 and CUL1.

Substrate-recognition component of the SCF (SKP1-CUL1-F-box protein)-type E3 ubiquitin ligase complex. The protein is F-box only protein 15 (FBXO15) of Homo sapiens (Human).